Reading from the N-terminus, the 241-residue chain is Probable transcriptional regulatory protein Rmet_0785 (241 aa).

The protein belongs to the TACO1 family.

The protein localises to the cytoplasm. This is Probable transcriptional regulatory protein Rmet_0785 from Cupriavidus metallidurans (strain ATCC 43123 / DSM 2839 / NBRC 102507 / CH34) (Ralstonia metallidurans).